A 123-amino-acid polypeptide reads, in one-letter code: Ribosome-binding factor A (123 aa).

It belongs to the RbfA family. In terms of assembly, monomer. Binds 30S ribosomal subunits, but not 50S ribosomal subunits or 70S ribosomes.

It localises to the cytoplasm. In terms of biological role, one of several proteins that assist in the late maturation steps of the functional core of the 30S ribosomal subunit. Associates with free 30S ribosomal subunits (but not with 30S subunits that are part of 70S ribosomes or polysomes). Required for efficient processing of 16S rRNA. May interact with the 5'-terminal helix region of 16S rRNA. This is Ribosome-binding factor A from Cupriavidus taiwanensis (strain DSM 17343 / BCRC 17206 / CCUG 44338 / CIP 107171 / LMG 19424 / R1) (Ralstonia taiwanensis (strain LMG 19424)).